The chain runs to 61 residues: Large ribosomal subunit protein eL20 (61 aa).

Belongs to the eukaryotic ribosomal protein eL20 family. Part of the 50S ribosomal subunit. Binds 23S rRNA.

This is Large ribosomal subunit protein eL20 from Methanosarcina mazei (strain ATCC BAA-159 / DSM 3647 / Goe1 / Go1 / JCM 11833 / OCM 88) (Methanosarcina frisia).